Here is an 86-residue protein sequence, read N- to C-terminus: CRISPR-associated endoribonuclease Cas2 (86 aa).

Residue Asp-8 participates in Mg(2+) binding.

This sequence belongs to the CRISPR-associated endoribonuclease Cas2 protein family. In terms of assembly, homodimer, forms a heterotetramer with a Cas1 homodimer. It depends on Mg(2+) as a cofactor.

Its function is as follows. CRISPR (clustered regularly interspaced short palindromic repeat), is an adaptive immune system that provides protection against mobile genetic elements (viruses, transposable elements and conjugative plasmids). CRISPR clusters contain sequences complementary to antecedent mobile elements and target invading nucleic acids. CRISPR clusters are transcribed and processed into CRISPR RNA (crRNA). Functions as a ssRNA-specific endoribonuclease. Involved in the integration of spacer DNA into the CRISPR cassette. Plasmid targeted by CRISPR locus P1 transform wild-type cells very poorly. The sequence is that of CRISPR-associated endoribonuclease Cas2 from Haloferax volcanii (strain ATCC 29605 / DSM 3757 / JCM 8879 / NBRC 14742 / NCIMB 2012 / VKM B-1768 / DS2) (Halobacterium volcanii).